The following is a 319-amino-acid chain: Acetyl esterase (319 aa).

The Involved in the stabilization of the negatively charged intermediate by the formation of the oxyanion hole motif lies at 91 to 93; the sequence is HGG. Active-site residues include Ser165, Asp262, and His292.

Belongs to the 'GDXG' lipolytic enzyme family. As to quaternary structure, homodimer. Interacts with MalT and MelA.

It localises to the cytoplasm. In terms of biological role, displays esterase activity towards short chain fatty esters (acyl chain length of up to 8 carbons). Able to hydrolyze triacetylglycerol (triacetin) and tributyrylglycerol (tributyrin), but not trioleylglycerol (triolein) or cholesterol oleate. Negatively regulates MalT activity by antagonizing maltotriose binding. Inhibits MelA galactosidase activity. In Shigella flexneri, this protein is Acetyl esterase.